Reading from the N-terminus, the 417-residue chain is Histidine--tRNA ligase (417 aa).

The protein belongs to the class-II aminoacyl-tRNA synthetase family. Homodimer.

The protein localises to the cytoplasm. The catalysed reaction is tRNA(His) + L-histidine + ATP = L-histidyl-tRNA(His) + AMP + diphosphate + H(+). This Nitratidesulfovibrio vulgaris (strain ATCC 29579 / DSM 644 / CCUG 34227 / NCIMB 8303 / VKM B-1760 / Hildenborough) (Desulfovibrio vulgaris) protein is Histidine--tRNA ligase.